The following is a 34-amino-acid chain: Tau-theraphotoxin-Pc1c (34 aa).

3 cysteine pairs are disulfide-bonded: C2–C16, C9–C21, and C15–C28. F34 is modified (phenylalanine amide).

It belongs to the neurotoxin 10 (Hwtx-1) family. 62 (Vatx) subfamily. In terms of tissue distribution, expressed by the venom gland.

It localises to the secreted. Selectively activates mammalian TRPV1, or capsaicin receptor, a non-selective cation channel expressed by sensory neurons of the pain pathway. Is more potent than VaTx1 and VaTx2. Interacts with distinct regions of the channel than capsaicin, since it only acts on the extracellular face of the channel, and capsaicin binds to the cytosolic side. Also activates avian TRPV1, which is insensitive to capsaicin. In mice, elicits pain-related behaviors, such as licking and flinching of the affected limb. The paw of toxin-injected mice shows substantial edema. The protein is Tau-theraphotoxin-Pc1c of Psalmopoeus cambridgei (Trinidad chevron tarantula).